Consider the following 269-residue polypeptide: Hydroxypyruvate/pyruvate aldolase (269 aa).

The Proton acceptor role is filled by His-47. A divalent metal cation contacts are provided by Glu-151 and Asp-177.

Belongs to the HpcH/HpaI aldolase family. A divalent metal cation serves as cofactor.

It catalyses the reaction D-glyceraldehyde + 3-hydroxypyruvate = 2-dehydro-D-gluconate. The enzyme catalyses D-glyceraldehyde + 3-hydroxypyruvate = (3R,4S,5R)-3,4,5,6-tetrahydroxy-2-oxohexanoate. The catalysed reaction is D-glyceraldehyde + 3-hydroxypyruvate = 2-dehydro-D-galactonate. It carries out the reaction D-glyceraldehyde + pyruvate = 2-dehydro-3-deoxy-L-galactonate. It catalyses the reaction 2-dehydro-3-deoxy-D-gluconate = D-glyceraldehyde + pyruvate. Its function is as follows. Aldolase which can catalyze in vitro the aldolisation reaction between hydroxypyruvate (HPA) or pyruvate (PA) and D-glyceraldehyde (D-GA). The condensation of hydroxypyruvate and D-glyceraldehyde produces 2-dehydro-D-gluconate as the major product, (3R,4S,5R)-3,4,5,6-tetrahydroxy-2-oxohexanoate and 2-dehydro-D-galactonate. The condensation of pyruvate and D-glyceraldehyde produces 2-dehydro-3-deoxy-L-galactonate as the major product and 2-dehydro-3-deoxy-D-gluconate. The protein is Hydroxypyruvate/pyruvate aldolase of Cupriavidus necator (strain ATCC 17699 / DSM 428 / KCTC 22496 / NCIMB 10442 / H16 / Stanier 337) (Ralstonia eutropha).